We begin with the raw amino-acid sequence, 315 residues long: Methionyl-tRNA formyltransferase (315 aa).

113-116 (SLLP) lines the (6S)-5,6,7,8-tetrahydrofolate pocket.

Belongs to the Fmt family.

It catalyses the reaction L-methionyl-tRNA(fMet) + (6R)-10-formyltetrahydrofolate = N-formyl-L-methionyl-tRNA(fMet) + (6S)-5,6,7,8-tetrahydrofolate + H(+). Attaches a formyl group to the free amino group of methionyl-tRNA(fMet). The formyl group appears to play a dual role in the initiator identity of N-formylmethionyl-tRNA by promoting its recognition by IF2 and preventing the misappropriation of this tRNA by the elongation apparatus. The sequence is that of Methionyl-tRNA formyltransferase from Escherichia coli (strain SE11).